We begin with the raw amino-acid sequence, 52 residues long: Ovomucoid (52 aa).

One can recognise a Kazal-like domain in the interval 2-52; the sequence is VDCSEYPKPACPKDYRPVCGSDNKTYGNKCNFCNAVVESNGTLTLNRFGKC. Intrachain disulfides connect cysteine 4/cysteine 34, cysteine 12/cysteine 31, and cysteine 20/cysteine 52. The N-linked (GlcNAc...) asparagine glycan is linked to asparagine 41.

Its subcellular location is the secreted. This chain is Ovomucoid, found in Coturnix delegorguei (Harlequin quail).